An 891-amino-acid polypeptide reads, in one-letter code: Inter-alpha-trypsin inhibitor heavy chain H3 (891 aa).

A signal peptide spans 1-20 (MALAQWPYLILALLSGLAVS). The propeptide occupies 21–34 (GFPRNPSLLLGKRS). The 130-residue stretch at 29-158 (LLGKRSLPGR…KVTFELTYEE (130 aa)) folds into the VIT domain. An N-linked (GlcNAc...) asparagine glycan is attached at asparagine 91. The VWFA domain maps to 284–467 (SVVFVIDVSG…LQLQGFYEEV (184 aa)). Aspartate 651 bears the Aspartate 1-(chondroitin 4-sulfate)-ester mark. The propeptide occupies 652 to 891 (PHFIIQIPEK…HRDYIVPNLF (240 aa)).

It belongs to the ITIH family. I-alpha-I plasma protease inhibitors are assembled from one or two heavy chains (H1, H2 or H3) and one light chain, bikunin. Inter-alpha-inhibitor (I-alpha-I) is composed of H1, H2 and bikunin, inter-alpha-like inhibitor (I-alpha-LI) of H2 and bikunin, and pre-alpha-inhibitor (P-alpha-I) of H3 and bikunin.

The protein localises to the secreted. Its function is as follows. May act as a carrier of hyaluronan in serum or as a binding protein between hyaluronan and other matrix protein, including those on cell surfaces in tissues to regulate the localization, synthesis and degradation of hyaluronan which are essential to cells undergoing biological processes. This is Inter-alpha-trypsin inhibitor heavy chain H3 (ITIH3) from Bos taurus (Bovine).